Here is a 506-residue protein sequence, read N- to C-terminus: Proline--tRNA ligase (506 aa).

This sequence belongs to the class-II aminoacyl-tRNA synthetase family. ProS type 3 subfamily. In terms of assembly, homodimer.

The protein resides in the cytoplasm. It catalyses the reaction tRNA(Pro) + L-proline + ATP = L-prolyl-tRNA(Pro) + AMP + diphosphate. Its function is as follows. Catalyzes the attachment of proline to tRNA(Pro) in a two-step reaction: proline is first activated by ATP to form Pro-AMP and then transferred to the acceptor end of tRNA(Pro). This is Proline--tRNA ligase from Akkermansia muciniphila (strain ATCC BAA-835 / DSM 22959 / JCM 33894 / BCRC 81048 / CCUG 64013 / CIP 107961 / Muc).